The primary structure comprises 143 residues: MDITEIMNLIPHRYPFLLVDRVLEIDLNKSILGIKNVTVNEPQFTGHFPARPVMPGVLMVEAMAQLAAILVAKSLGSTKNKEVFLMTIENSKFRRIVQPGDTMHIHTVIDQQRANVWKFSSTVKIEGEITAESKFTAMIKDKA.

Histidine 47 is an active-site residue.

It belongs to the thioester dehydratase family. FabZ subfamily.

The protein localises to the cytoplasm. It catalyses the reaction a (3R)-hydroxyacyl-[ACP] = a (2E)-enoyl-[ACP] + H2O. Involved in unsaturated fatty acids biosynthesis. Catalyzes the dehydration of short chain beta-hydroxyacyl-ACPs and long chain saturated and unsaturated beta-hydroxyacyl-ACPs. In Rickettsia canadensis (strain McKiel), this protein is 3-hydroxyacyl-[acyl-carrier-protein] dehydratase FabZ.